Here is a 342-residue protein sequence, read N- to C-terminus: Holliday junction branch migration complex subunit RuvB (342 aa).

A large ATPase domain (RuvB-L) region spans residues 1–185 (MTVKPLRDVT…FPIQERLEYY (185 aa)). ATP-binding positions include leucine 24, arginine 25, glycine 66, lysine 69, threonine 70, serine 71, 132–134 (EDY), arginine 175, tyrosine 185, and arginine 222. Threonine 70 is a binding site for Mg(2+). The segment at 186–256 (GPAELKEIAV…VVDRTLRRLE (71 aa)) is small ATPAse domain (RuvB-S). The interval 259-342 (ARGLDAMDRR…RPGGKQGSLV (84 aa)) is head domain (RuvB-H). Residues arginine 314 and arginine 319 each coordinate DNA.

This sequence belongs to the RuvB family. As to quaternary structure, homohexamer. Forms an RuvA(8)-RuvB(12)-Holliday junction (HJ) complex. HJ DNA is sandwiched between 2 RuvA tetramers; dsDNA enters through RuvA and exits via RuvB. An RuvB hexamer assembles on each DNA strand where it exits the tetramer. Each RuvB hexamer is contacted by two RuvA subunits (via domain III) on 2 adjacent RuvB subunits; this complex drives branch migration. In the full resolvosome a probable DNA-RuvA(4)-RuvB(12)-RuvC(2) complex forms which resolves the HJ.

The protein resides in the cytoplasm. It catalyses the reaction ATP + H2O = ADP + phosphate + H(+). Its function is as follows. The RuvA-RuvB-RuvC complex processes Holliday junction (HJ) DNA during genetic recombination and DNA repair, while the RuvA-RuvB complex plays an important role in the rescue of blocked DNA replication forks via replication fork reversal (RFR). RuvA specifically binds to HJ cruciform DNA, conferring on it an open structure. The RuvB hexamer acts as an ATP-dependent pump, pulling dsDNA into and through the RuvAB complex. RuvB forms 2 homohexamers on either side of HJ DNA bound by 1 or 2 RuvA tetramers; 4 subunits per hexamer contact DNA at a time. Coordinated motions by a converter formed by DNA-disengaged RuvB subunits stimulates ATP hydrolysis and nucleotide exchange. Immobilization of the converter enables RuvB to convert the ATP-contained energy into a lever motion, pulling 2 nucleotides of DNA out of the RuvA tetramer per ATP hydrolyzed, thus driving DNA branch migration. The RuvB motors rotate together with the DNA substrate, which together with the progressing nucleotide cycle form the mechanistic basis for DNA recombination by continuous HJ branch migration. Branch migration allows RuvC to scan DNA until it finds its consensus sequence, where it cleaves and resolves cruciform DNA. This chain is Holliday junction branch migration complex subunit RuvB, found in Anaeromyxobacter sp. (strain K).